The chain runs to 228 residues: 7-cyano-7-deazaguanine synthase (228 aa).

Residue 9–19 (LSGGPDSTTVL) coordinates ATP. 4 residues coordinate Zn(2+): C193, C203, C206, and C209.

It belongs to the QueC family. Zn(2+) serves as cofactor.

The catalysed reaction is 7-carboxy-7-deazaguanine + NH4(+) + ATP = 7-cyano-7-deazaguanine + ADP + phosphate + H2O + H(+). Its pathway is purine metabolism; 7-cyano-7-deazaguanine biosynthesis. In terms of biological role, catalyzes the ATP-dependent conversion of 7-carboxy-7-deazaguanine (CDG) to 7-cyano-7-deazaguanine (preQ(0)). This is 7-cyano-7-deazaguanine synthase from Rickettsia africae (strain ESF-5).